The sequence spans 255 residues: uncharacterized protein (255 aa).

It belongs to the methyltransferase superfamily.

This is an uncharacterized protein from Mycobacterium ulcerans (strain Agy99).